A 163-amino-acid polypeptide reads, in one-letter code: Transcription elongation factor GreA (163 aa).

A coiled-coil region spans residues 12-73 (YEKIQKEFEA…ELSDLLARAQ (62 aa)).

This sequence belongs to the GreA/GreB family.

In terms of biological role, necessary for efficient RNA polymerase transcription elongation past template-encoded arresting sites. The arresting sites in DNA have the property of trapping a certain fraction of elongating RNA polymerases that pass through, resulting in locked ternary complexes. Cleavage of the nascent transcript by cleavage factors such as GreA or GreB allows the resumption of elongation from the new 3'terminus. GreA releases sequences of 2 to 3 nucleotides. The protein is Transcription elongation factor GreA of Nitratiruptor sp. (strain SB155-2).